A 1641-amino-acid chain; its full sequence is Vitellogenin-1 (1641 aa).

The first 18 residues, 1-18 (MWYLAFLLIIGAYAADHA), serve as a signal peptide directing secretion. The 772-residue stretch at 19-790 (WETGNEYHYL…SQDTTVPKSS (772 aa)) folds into the Vitellogenin domain. The cysteines at positions 172 and 211 are disulfide-linked. The span at 322–334 (LRQPSVSLNSMEA) shows a compositional bias: polar residues. Residues 322-372 (LRQPSVSLNSMEARSSENSNEENRSDDDRSNFLSNSGEEREYLQSKPTLNE) are disordered. Residues 342 to 351 (EENRSDDDRS) are compositionally biased toward basic and acidic residues. 13 N-linked (GlcNAc...) asparagine glycosylation sites follow: Asn-344, Asn-549, Asn-566, Asn-831, Asn-875, Asn-898, Asn-1001, Asn-1053, Asn-1268, Asn-1393, Asn-1396, Asn-1505, and Asn-1523. Residues 1410–1597 (ESVCVLDKTH…TYAMTQESCQ (188 aa)) form the VWFD domain. Cys-1435 and Cys-1596 are disulfide-bonded. The interval 1594-1641 (ESCQGPAPENKRKAEQSTCMSRSYRPSDVISDREAGRSSTKNRGWGYH) is disordered.

Hemolymph.

It is found in the secreted. Precursor of the egg-yolk proteins that are sources of nutrients during embryonic development. The sequence is that of Vitellogenin-1 from Solenopsis invicta (Red imported fire ant).